The chain runs to 240 residues: Uridylate kinase (240 aa).

12–15 (KLSG) is a binding site for ATP. Position 54 (glycine 54) interacts with UMP. Positions 55 and 59 each coordinate ATP. Residues aspartate 74 and 135-142 (TGNPFFTT) each bind UMP. ATP contacts are provided by threonine 162, tyrosine 168, and aspartate 171.

It belongs to the UMP kinase family. Homohexamer.

The protein resides in the cytoplasm. It catalyses the reaction UMP + ATP = UDP + ADP. It functions in the pathway pyrimidine metabolism; CTP biosynthesis via de novo pathway; UDP from UMP (UMPK route): step 1/1. Inhibited by UTP. Functionally, catalyzes the reversible phosphorylation of UMP to UDP. The polypeptide is Uridylate kinase (Xanthomonas axonopodis pv. citri (strain 306)).